The primary structure comprises 235 residues: Purine nucleoside phosphorylase DeoD-type (235 aa).

Histidine 4 serves as a coordination point for a purine D-ribonucleoside. Residues glycine 20, arginine 24, arginine 43, and 87 to 90 (RVGT) each bind phosphate. Residues 179–181 (EME) and 203–204 (SD) contribute to the a purine D-ribonucleoside site. Aspartate 204 serves as the catalytic Proton donor.

It belongs to the PNP/UDP phosphorylase family. As to quaternary structure, homohexamer; trimer of homodimers.

It catalyses the reaction a purine D-ribonucleoside + phosphate = a purine nucleobase + alpha-D-ribose 1-phosphate. The enzyme catalyses a purine 2'-deoxy-D-ribonucleoside + phosphate = a purine nucleobase + 2-deoxy-alpha-D-ribose 1-phosphate. Functionally, catalyzes the reversible phosphorolytic breakdown of the N-glycosidic bond in the beta-(deoxy)ribonucleoside molecules, with the formation of the corresponding free purine bases and pentose-1-phosphate. The protein is Purine nucleoside phosphorylase DeoD-type of Exiguobacterium sibiricum (strain DSM 17290 / CCUG 55495 / CIP 109462 / JCM 13490 / 255-15).